Here is a 49-residue protein sequence, read N- to C-terminus: Zinc-containing ferredoxin (49 aa).

The tract at residues glycine 1–threonine 36 is N-terminal extension. Histidine 16 and histidine 19 together coordinate Zn(2+). Lysine 29 is subject to N6-methyllysine. Residue histidine 34 participates in Zn(2+) binding. The ferredoxin stretch occupies residues isoleucine 37–glycine 49. Cysteine 45 contacts [3Fe-4S] cluster.

The cofactor is [3Fe-4S] cluster. Requires [4Fe-4S] cluster as cofactor. Zn(2+) is required as a cofactor.

Ferredoxins are iron-sulfur proteins that transfer electrons in a wide variety of metabolic reactions. The polypeptide is Zinc-containing ferredoxin (zfx) (Acidianus infernus).